Here is a 122-residue protein sequence, read N- to C-terminus: Large ribosomal subunit protein uL18 (122 aa).

This sequence belongs to the universal ribosomal protein uL18 family. Part of the 50S ribosomal subunit; part of the 5S rRNA/L5/L18/L25 subcomplex. Contacts the 5S and 23S rRNAs.

Its function is as follows. This is one of the proteins that bind and probably mediate the attachment of the 5S RNA into the large ribosomal subunit, where it forms part of the central protuberance. The chain is Large ribosomal subunit protein uL18 from Thermotoga petrophila (strain ATCC BAA-488 / DSM 13995 / JCM 10881 / RKU-1).